A 342-amino-acid polypeptide reads, in one-letter code: MKQLESFQIPRIVIFGPGAILKTPLVVSELKAGRILVISGKSATTAYANQVAQLLSNYSVDVVRYNEVDLSKSSYDLVIGVGGGRPIDMAKVYSCVHKKPLVVIPTAASHDGIASPYVSYTLSQKLQTYGKIVASPVAIIADTSVILSAPSRLLKAGIGDLLGKIIAVRDWQLAHRLKGEEYSEYAAHLAVTSYKIAATNARRIRNFTREEDVRVLVKALIGCGVAMGIAGSSRPCSGSEHLFAHAIELRLQEESSEAVHGELVALGTIIMAYLHGINWRRIKKIAEIVGLPTTLKQAGIDADMAVEALTTAHALRPDRYTILGNGLSREAARRALEDTELI.

NAD(+) contacts are provided by residues 84-88 and 106-109; these read GRPID and TAAS. Position 111 (Asp-111) interacts with substrate. An NAD(+)-binding site is contributed by Ser-115. Position 160 (Asp-160) interacts with substrate. Residues Asp-160 and His-241 each contribute to the Zn(2+) site. Residue His-245 participates in substrate binding. His-260 contacts Zn(2+).

This sequence belongs to the glycerol-1-phosphate dehydrogenase family. In terms of assembly, homodimer. The cofactor is Zn(2+).

Its subcellular location is the cytoplasm. It catalyses the reaction sn-glycerol 1-phosphate + NAD(+) = dihydroxyacetone phosphate + NADH + H(+). The catalysed reaction is sn-glycerol 1-phosphate + NADP(+) = dihydroxyacetone phosphate + NADPH + H(+). The protein operates within membrane lipid metabolism; glycerophospholipid metabolism. Functionally, catalyzes the NAD(P)H-dependent reduction of dihydroxyacetonephosphate (DHAP or glycerone phosphate) to glycerol 1-phosphate (G1P). The G1P thus generated is used as the glycerophosphate backbone of phospholipids in the cellular membranes of Archaea. The protein is Glycerol-1-phosphate dehydrogenase [NAD(P)+] of Pyrobaculum aerophilum (strain ATCC 51768 / DSM 7523 / JCM 9630 / CIP 104966 / NBRC 100827 / IM2).